A 781-amino-acid chain; its full sequence is Putative UPF0313 protein YPO0674/y3502/YP_2990 (781 aa).

Positions 368–646 constitute a Radical SAM core domain; the sequence is AYDMIRFSIN…KALLRYHDPA (279 aa). C382, C386, and C389 together coordinate [4Fe-4S] cluster. A disordered region spans residues 681 to 781; sequence REARRALRHH…AGSRGKNRQH (101 aa). Polar residues predominate over residues 696 to 708; the sequence is KHTSITRQRQPSN. The segment covering 726 to 750 has biased composition (low complexity); it reads TSSAHSTSANQSTSANQSTSAAHST.

The protein belongs to the UPF0313 family. It depends on [4Fe-4S] cluster as a cofactor.

This chain is Putative UPF0313 protein YPO0674/y3502/YP_2990, found in Yersinia pestis.